The sequence spans 83 residues: MSGSTGERSFADIITSIRYWVIHSITIPSLFIAGWLFVSTGLAYDVFGSPRPNEYFTESRQGIPLITGRFDSLEQLDEFSKSF.

A helical transmembrane segment spans residues 21–35 (VIHSITIPSLFIAGW). His23 provides a ligand contact to heme.

It belongs to the PsbE/PsbF family. In terms of assembly, heterodimer of an alpha subunit and a beta subunit. PSII is composed of 1 copy each of membrane proteins PsbA, PsbB, PsbC, PsbD, PsbE, PsbF, PsbH, PsbI, PsbJ, PsbK, PsbL, PsbM, PsbT, PsbX, PsbY, PsbZ, Psb30/Ycf12, at least 3 peripheral proteins of the oxygen-evolving complex and a large number of cofactors. It forms dimeric complexes. The cofactor is heme b.

The protein localises to the plastid. The protein resides in the chloroplast thylakoid membrane. Functionally, this b-type cytochrome is tightly associated with the reaction center of photosystem II (PSII). PSII is a light-driven water:plastoquinone oxidoreductase that uses light energy to abstract electrons from H(2)O, generating O(2) and a proton gradient subsequently used for ATP formation. It consists of a core antenna complex that captures photons, and an electron transfer chain that converts photonic excitation into a charge separation. This Mesembryanthemum crystallinum (Common ice plant) protein is Cytochrome b559 subunit alpha.